A 270-amino-acid chain; its full sequence is F-actin-capping protein subunit beta (270 aa).

Residues 245 to 258 (QTRSQKSTTDSQEQ) are compositionally biased toward polar residues. A disordered region spans residues 245 to 270 (QTRSQKSTTDSQEQQQKEVIKGLQNL).

The protein belongs to the F-actin-capping protein beta subunit family. Component of the F-actin capping complex, composed of a heterodimer of an alpha and a beta subunit.

The protein resides in the cytoplasm. The protein localises to the cytoskeleton. Its subcellular location is the actin patch. In terms of biological role, F-actin-capping proteins bind in a Ca(2+)-independent manner to the fast growing ends of actin filaments (barbed end) thereby blocking the exchange of subunits at these ends. Unlike other capping proteins (such as gelsolin and severin), these proteins do not sever actin filaments. The chain is F-actin-capping protein subunit beta (CAP2) from Candida glabrata (strain ATCC 2001 / BCRC 20586 / JCM 3761 / NBRC 0622 / NRRL Y-65 / CBS 138) (Yeast).